The sequence spans 588 residues: Adenine deaminase (588 aa).

The protein belongs to the metallo-dependent hydrolases superfamily. Adenine deaminase family. As to quaternary structure, homodimer. Mn(2+) serves as cofactor.

It catalyses the reaction adenine + H2O + H(+) = hypoxanthine + NH4(+). In Escherichia coli O7:K1 (strain IAI39 / ExPEC), this protein is Adenine deaminase.